Here is a 320-residue protein sequence, read N- to C-terminus: MSVGFIGAGQLAYALARGFTAAGILSAHKIIASSPEMNLPTVSALRKMGVNLTRSNKETVKHSDVLFLAVKPHIIPFILDEIGADVQAGHIVVSCAAGVTISSVEKKLMAFQPAPKVIRCMTNTPVVVQEGATVYATGTHALVEDGQLLEQLMSSVGFCTEVEEDLIDAVTGLSGSGPAYAFMALDALADGGVKMGLPRRLAIQLGAQALLGAAKMLLDSEQHPCQLKDNVCSPGGATIHALHFLESGGFRSLLINAVEASCIRTRELQSMADQEKISPAALKKTLLDRVKLESPTVSTLTPSSPGKLLTRSLALGGKKD.

Ser-2 carries the N-acetylserine modification. NADP(+)-binding positions include 6 to 11 and Ser-34; that span reads IGAGQL. NADPH is bound by residues Ala-8, Gln-10, Leu-11, Ser-34, Glu-36, Asn-56, Val-70, Lys-71, and Ala-97. Residues Asn-56, 69–72, and 95–97 contribute to the NADP(+) site; these read AVKP and CAA. Glu-164 is an L-proline binding site. An NADPH-binding site is contributed by Asn-230. The L-proline site is built by Ala-237 and Thr-238. The segment covering 296-305 has biased composition (low complexity); it reads TVSTLTPSSP. The tract at residues 296–320 is disordered; sequence TVSTLTPSSPGKLLTRSLALGGKKD. Ser-304 is modified (phosphoserine).

The protein belongs to the pyrroline-5-carboxylate reductase family. In terms of assembly, homodecamer; composed of 5 homodimers. Interacts with LTO1.

It localises to the cytoplasm. The protein localises to the mitochondrion. The enzyme catalyses L-proline + NADP(+) = (S)-1-pyrroline-5-carboxylate + NADPH + 2 H(+). It carries out the reaction L-proline + NAD(+) = (S)-1-pyrroline-5-carboxylate + NADH + 2 H(+). It participates in amino-acid biosynthesis; L-proline biosynthesis; L-proline from L-glutamate 5-semialdehyde: step 1/1. Oxidoreductase that catalyzes the last step in proline biosynthesis, which corresponds to the reduction of pyrroline-5-carboxylate to L-proline using NAD(P)H. At physiologic concentrations, has higher specific activity in the presence of NADH. Involved in cellular response to oxidative stress. In some cell types, such as erythrocytes, its primary function may be the generation of NADP(+). In Pongo abelii (Sumatran orangutan), this protein is Pyrroline-5-carboxylate reductase 2 (PYCR2).